The chain runs to 79 residues: Tau-theraphotoxin-Hs1a (79 aa).

Cystine bridges form between Cys-2/Cys-16, Cys-9/Cys-23, Cys-15/Cys-31, Cys-44/Cys-58, Cys-51/Cys-63, and Cys-57/Cys-71. Domain repeat units lie at residues 2–31 and 42–71; these read CAKE…IPHC and TNCA…IPYC. A 2 X approximate repeats with cysteine pattern C-C-CC-C-C region spans residues 2–71; sequence CAKEGEVCSW…DCPLAFIPYC (70 aa).

Belongs to the neurotoxin 23 family. Double-knot toxin subfamily. Interacts with TRPV1 (2 toxins (4 moieties) bind 1 channel (homotetramer)). In terms of tissue distribution, expressed by the venom gland.

It is found in the secreted. Selectively activates the heat-activated TRPV1 channel. It binds to TRPV1 in an open state-dependent manner, trapping it there to produce irreversible currents. It binds to the outer edge of the external pore of TRPV1 in a counterclockwise configuration, using a limited protein-protein interface and inserting hydrophobic residues into the bilayer. It also partitions naturally into membranes, with the two lobes exhibiting opposing energetics for membrane partitioning (K1) and channel activation (K2). In addition, the toxin disrupts a cluster of hydrophobic residues behind the selectivity filter that are critical for channel activation. This Cyriopagopus schmidti (Chinese bird spider) protein is Tau-theraphotoxin-Hs1a.